Consider the following 634-residue polypeptide: Microtubule-associated protein 70-2 (634 aa).

The interval methionine 1–serine 57 is disordered. A compositionally biased stretch (polar residues) spans valine 25–valine 35. Over residues serine 36–serine 47 the composition is skewed to low complexity. The stretch at aspartate 74–leucine 392 forms a coiled coil. The required for targeting to microtubules stretch occupies residues isoleucine 258 to serine 494. Composition is skewed to polar residues over residues arginine 393–glutamine 417 and methionine 443–serine 464. 2 disordered regions span residues arginine 393 to glycine 526 and valine 594 to glutamine 634. Residues leucine 532–arginine 601 are a coiled coil. A compositionally biased stretch (polar residues) spans phenylalanine 605–glutamine 616.

It belongs to the MAP70 family.

It localises to the cytoplasm. It is found in the cytoskeleton. In terms of biological role, plant-specific protein that interact with microtubules. This Arabidopsis thaliana (Mouse-ear cress) protein is Microtubule-associated protein 70-2 (MAP70.2).